The sequence spans 363 residues: NAD(P)H-quinone oxidoreductase subunit 1, chloroplastic (363 aa).

6 consecutive transmembrane segments (helical) span residues Ile-27–Ile-47, Phe-98–Phe-118, Leu-127–Met-147, Tyr-248–Ser-268, Val-300–Ile-320, and Leu-336–Thr-356.

The protein belongs to the complex I subunit 1 family. As to quaternary structure, NDH is composed of at least 16 different subunits, 5 of which are encoded in the nucleus.

The protein localises to the plastid. Its subcellular location is the chloroplast thylakoid membrane. It carries out the reaction a plastoquinone + NADH + (n+1) H(+)(in) = a plastoquinol + NAD(+) + n H(+)(out). It catalyses the reaction a plastoquinone + NADPH + (n+1) H(+)(in) = a plastoquinol + NADP(+) + n H(+)(out). NDH shuttles electrons from NAD(P)H:plastoquinone, via FMN and iron-sulfur (Fe-S) centers, to quinones in the photosynthetic chain and possibly in a chloroplast respiratory chain. The immediate electron acceptor for the enzyme in this species is believed to be plastoquinone. Couples the redox reaction to proton translocation, and thus conserves the redox energy in a proton gradient. The chain is NAD(P)H-quinone oxidoreductase subunit 1, chloroplastic from Platanus occidentalis (Sycamore).